Here is a 465-residue protein sequence, read N- to C-terminus: BTB/POZ and MATH domain-containing protein 4 (465 aa).

The disordered stretch occupies residues 12-40 (LQRQNPLQKSEQQRRNFEMPSPPTTTSLS). The MATH domain maps to 46-180 (NGSHSFTIKG…DDCLKINCTV (135 aa)). The 67-residue stretch at 216 to 282 (SDITFNVSGE…IYKDALIEDA (67 aa)) folds into the BTB domain. 2 disordered regions span residues 395–429 (SGGG…INGG) and 441–465 (VNAN…ELED). Residues 442–458 (NANGSGRNNNDNNNSDD) are compositionally biased toward low complexity.

Belongs to the Tdpoz family. As to quaternary structure, interacts with RAP2-4. Binds to MYB56 at the promoter of FLOWERING LOCUS T (FT). In terms of tissue distribution, ubiquitous.

Its subcellular location is the cytoplasm. The protein operates within protein modification; protein ubiquitination. Functionally, may act as a substrate-specific adapter of an E3 ubiquitin-protein ligase complex (CUL3-RBX1-BTB) which mediates the ubiquitination and subsequent proteasomal degradation of target proteins. The chain is BTB/POZ and MATH domain-containing protein 4 (BPM4) from Arabidopsis thaliana (Mouse-ear cress).